The primary structure comprises 89 residues: UPF0297 protein OB2008 (89 aa).

It belongs to the UPF0297 family.

In Oceanobacillus iheyensis (strain DSM 14371 / CIP 107618 / JCM 11309 / KCTC 3954 / HTE831), this protein is UPF0297 protein OB2008.